The primary structure comprises 117 residues: Aspartate 1-decarboxylase (117 aa).

The active-site Schiff-base intermediate with substrate; via pyruvic acid is the Ser25. Residue Ser25 is modified to Pyruvic acid (Ser). Thr57 contributes to the substrate binding site. Tyr58 (proton donor) is an active-site residue. Gly73–Ala75 serves as a coordination point for substrate.

This sequence belongs to the PanD family. Heterooctamer of four alpha and four beta subunits. Requires pyruvate as cofactor. Post-translationally, is synthesized initially as an inactive proenzyme, which is activated by self-cleavage at a specific serine bond to produce a beta-subunit with a hydroxyl group at its C-terminus and an alpha-subunit with a pyruvoyl group at its N-terminus.

The protein localises to the cytoplasm. It carries out the reaction L-aspartate + H(+) = beta-alanine + CO2. It functions in the pathway cofactor biosynthesis; (R)-pantothenate biosynthesis; beta-alanine from L-aspartate: step 1/1. Functionally, catalyzes the pyruvoyl-dependent decarboxylation of aspartate to produce beta-alanine. The protein is Aspartate 1-decarboxylase of Bacteroides fragilis (strain ATCC 25285 / DSM 2151 / CCUG 4856 / JCM 11019 / LMG 10263 / NCTC 9343 / Onslow / VPI 2553 / EN-2).